The sequence spans 424 residues: MSVAVLAFGLNHTSAPVSVRERVSMPVDLVKPALAGLRSAFGGAVREAAILSTCNRTEVYCAADAAVAEQLPIWLADHHCMEAGSLHPHLYRLHQNDAVRHAFRVASGLDSMVLGEPQILGQMKDAVRAAEEAGSLGTLLHQLFQRTFAVAKEVRSQTEIGAHSVSMAAAAVRLAERVFGDLGQARTLFIGAGEMIELCATHFAAQHPRSMVVANRTAERAESLAGRFSAGTMKLADLTERLAEFDVVVSCTASSLPILGLGMVERATRQRRHRPMVMIDLAVPRDIEPEVGRLDDVYLYSVDDLGRLVQSGTDARRAAVVQAEAIIETRVQGFMHWMQSREVVPVIRGLHQAAEDVQAAELERARRLLARGESPEAVLEQLAHGLTQKYLHGPLAALNRSAGDERKQLLAWMPRLFPGRDSRR.

Residues 53–56 (TCNR), Ser111, 116–118 (EPQ), and Gln122 each bind substrate. Residue Cys54 is the Nucleophile of the active site. 191-196 (GAGEMI) contacts NADP(+).

The protein belongs to the glutamyl-tRNA reductase family. As to quaternary structure, homodimer.

The catalysed reaction is (S)-4-amino-5-oxopentanoate + tRNA(Glu) + NADP(+) = L-glutamyl-tRNA(Glu) + NADPH + H(+). The protein operates within porphyrin-containing compound metabolism; protoporphyrin-IX biosynthesis; 5-aminolevulinate from L-glutamyl-tRNA(Glu): step 1/2. Functionally, catalyzes the NADPH-dependent reduction of glutamyl-tRNA(Glu) to glutamate 1-semialdehyde (GSA). The chain is Glutamyl-tRNA reductase from Bordetella avium (strain 197N).